A 58-amino-acid chain; its full sequence is Large ribosomal subunit protein uL30 (58 aa).

Belongs to the universal ribosomal protein uL30 family. Part of the 50S ribosomal subunit.

This Trichlorobacter lovleyi (strain ATCC BAA-1151 / DSM 17278 / SZ) (Geobacter lovleyi) protein is Large ribosomal subunit protein uL30.